The primary structure comprises 366 residues: tRNA/tmRNA (uracil-C(5))-methyltransferase (366 aa).

Residues Gln-190, Tyr-218, Asn-223, Glu-239, and Asp-299 each contribute to the S-adenosyl-L-methionine site. Cys-324 serves as the catalytic Nucleophile. The active-site Proton acceptor is Glu-358.

It belongs to the class I-like SAM-binding methyltransferase superfamily. RNA M5U methyltransferase family. TrmA subfamily.

The enzyme catalyses uridine(54) in tRNA + S-adenosyl-L-methionine = 5-methyluridine(54) in tRNA + S-adenosyl-L-homocysteine + H(+). It carries out the reaction uridine(341) in tmRNA + S-adenosyl-L-methionine = 5-methyluridine(341) in tmRNA + S-adenosyl-L-homocysteine + H(+). Its function is as follows. Dual-specificity methyltransferase that catalyzes the formation of 5-methyluridine at position 54 (m5U54) in all tRNAs, and that of position 341 (m5U341) in tmRNA (transfer-mRNA). In Escherichia coli O157:H7, this protein is tRNA/tmRNA (uracil-C(5))-methyltransferase.